Consider the following 208-residue polypeptide: Cytochrome c biogenesis ATP-binding export protein CcmA (208 aa).

The ABC transporter domain occupies 3-206 (LSGKDLAAHR…LEKFVPSQER (204 aa)). 35-42 (GPNGIGKS) lines the ATP pocket.

It belongs to the ABC transporter superfamily. CcmA exporter (TC 3.A.1.107) family. In terms of assembly, the complex is composed of two ATP-binding proteins (CcmA) and two transmembrane proteins (CcmB).

It localises to the cell inner membrane. The enzyme catalyses heme b(in) + ATP + H2O = heme b(out) + ADP + phosphate + H(+). In terms of biological role, part of the ABC transporter complex CcmAB involved in the biogenesis of c-type cytochromes; once thought to export heme, this seems not to be the case, but its exact role is uncertain. Responsible for energy coupling to the transport system. This chain is Cytochrome c biogenesis ATP-binding export protein CcmA, found in Bartonella quintana (strain Toulouse) (Rochalimaea quintana).